Consider the following 412-residue polypeptide: NADH-quinone oxidoreductase subunit D (412 aa).

This sequence belongs to the complex I 49 kDa subunit family. In terms of assembly, NDH-1 is composed of at least 14 different subunits, Nqo1 to Nqo14. The complex has a L-shaped structure, with the hydrophobic arm (subunits Nqo7, Nqo8, Nqo10 to Nqo14) embedded in the inner membrane and the hydrophilic peripheral arm (subunits Nqo1 to Nqo6, Nqo9) protruding into the bacterial cytoplasm. The hydrophilic domain contains all the redox centers. NADH-quinone oxidoreductase forms a supercomplex with ubiquinol-cytochrome c reductase complex (complex III or cytochrome b-c1 complex) and cytochrome c oxidase (complex IV), which stabilizes the NADH-quinone oxidoreductase complex.

Its subcellular location is the cell inner membrane. It catalyses the reaction a quinone + NADH + 5 H(+)(in) = a quinol + NAD(+) + 4 H(+)(out). Its function is as follows. NDH-1 shuttles electrons from NADH, via FMN and iron-sulfur (Fe-S) centers, to quinones in the respiratory chain. The immediate electron acceptor for the enzyme in this species is believed to be ubiquinone. Couples the redox reaction to proton translocation (for every two electrons transferred, four hydrogen ions are translocated across the cytoplasmic membrane), and thus conserves the redox energy in a proton gradient. In Paracoccus denitrificans (strain Pd 1222), this protein is NADH-quinone oxidoreductase subunit D (nuoD).